A 2439-amino-acid chain; its full sequence is Mucin-6 (2439 aa).

Positions Met-1–Thr-22 are cleaved as a signal peptide. A VWFD 1 domain is found at Gly-43–Thr-214. Cystine bridges form between Cys-45–Cys-176 and Cys-67–Cys-213. Residue Asn-268 is glycosylated (N-linked (GlcNAc...) asparagine). A TIL domain is found at Cys-302 to Cys-357. Positions Gly-395 to Ser-579 constitute a VWFD 2 domain. Cystine bridges form between Cys-397–Cys-533 and Cys-419–Cys-578. Asn-486 and Asn-659 each carry an N-linked (GlcNAc...) asparagine glycan. The VWFD 3 domain occupies Ser-866–Gly-1038. Cystine bridges form between Cys-868/Cys-1002, Cys-890/Cys-1037, Cys-899/Cys-999, and Cys-917/Cys-924. Residues Asn-975 and Asn-1179 are each glycosylated (N-linked (GlcNAc...) asparagine). Disordered regions lie at residues Pro-1202–Val-1455, Ala-1471–Pro-1626, Ser-1642–Thr-1834, Ser-1868–Pro-1983, Ala-2033–Ser-2077, Ser-2090–Pro-2196, Val-2233–Thr-2278, and Leu-2323–Val-2348. Residues Thr-1224–Thr-1265 show a composition bias toward low complexity. The segment covering Thr-1276 to Leu-1286 has biased composition (polar residues). Positions Ser-1294–Thr-1339 are enriched in low complexity. A compositionally biased stretch (polar residues) spans Ser-1340–Leu-1351. Composition is skewed to low complexity over residues Pro-1352 to Thr-1373 and Thr-1381 to Pro-1415. Polar residues-rich tracts occupy residues Val-1416 to Val-1455, Ala-1471 to Thr-1481, and Leu-1490 to Lys-1520. Low complexity-rich tracts occupy residues Thr-1521–Ser-1567 and Thr-1574–Thr-1611. The stretch at Thr-1561 to Ser-1738 is one 1; truncated repeat. The interval His-1607–His-1953 is approximate repeats. Positions Leu-1659–Asn-1686 are enriched in polar residues. Residues Thr-1687 to Ser-1768 are compositionally biased toward low complexity. The span at Ile-1769–Leu-1793 shows a compositional bias: polar residues. The stretch at Thr-1785–His-1953 is repeat 2. 2 stretches are compositionally biased toward low complexity: residues Pro-1794 to Thr-1834 and Thr-1891 to Ser-1917. A compositionally biased stretch (polar residues) spans Leu-1918–Leu-1962. Over residues Pro-1963–Pro-1983 the composition is skewed to low complexity. The span at Leu-2052–Gly-2070 shows a compositional bias: polar residues. Residues Ser-2090 to Pro-2102 are compositionally biased toward low complexity. A compositionally biased stretch (polar residues) spans Ile-2107–Pro-2120. The segment covering Val-2121–Pro-2196 has biased composition (low complexity). The span at His-2240–Phe-2264 shows a compositional bias: polar residues. Low complexity predominate over residues Ser-2265 to Thr-2278. A compositionally biased stretch (polar residues) spans Leu-2323–Gly-2347. 4 disulfide bridges follow: Cys-2349–Cys-2396, Cys-2363–Cys-2410, Cys-2372–Cys-2430, and Cys-2376–Cys-2432. The 90-residue stretch at Cys-2349–Gly-2438 folds into the CTCK domain.

In terms of assembly, multimer; disulfide-linked. Post-translationally, O-glycosylated. As to expression, expressed in the regenerative zone of gastric antrum, gastric body mucosa and gastric incisura mucosa. Expressed in the deeper mucous glands of gastric antrum. Overexpressed in Helicobacter pylori infected gastric epithelium. Highly expressed in duodenal Brunner's glands, gall bladder, seminal vesicle, pancreatic centroacinar cells and ducts, and periductal glands of the common bile duct.

Its subcellular location is the secreted. Its function is as follows. May provide a mechanism for modulation of the composition of the protective mucus layer related to acid secretion or the presence of bacteria and noxious agents in the lumen. Plays an important role in the cytoprotection of epithelial surfaces and are used as tumor markers in a variety of cancers. May play a role in epithelial organogenesis. This is Mucin-6 (MUC6) from Homo sapiens (Human).